The primary structure comprises 474 residues: Selection and upkeep of intraepithelial T-cells protein 4 (474 aa).

The first 25 residues, 1–25, serve as a signal peptide directing secretion; it reads MGATEVLTSYCVVLCLLQMVALSSG. Topologically, residues 26–241 are extracellular; sequence HFTVIGSQRP…VLSGELFSWK (216 aa). The region spanning 27–140 is the Ig-like V-type domain; that stretch reads FTVIGSQRPI…EEHITEVKVT (114 aa). 2 cysteine pairs are disulfide-bonded: cysteine 48/cysteine 122 and cysteine 162/cysteine 216. Residues asparagine 111 and asparagine 199 are each glycosylated (N-linked (GlcNAc...) asparagine). The Ig-like C1-type domain occupies 141–234; sequence ATSSDIQILM…QEQSINIVLS (94 aa). A helical transmembrane segment spans residues 242–262; that stretch reads IVWIMILSTISFVMIDFCMTY. Over 263 to 298 the chain is Cytoplasmic; that stretch reads CVQQQLIHEESLSTVDNDQCESDQSEGTCYKRNYPW. The helical transmembrane segment at 299–319 threads the bilayer; sequence IIIAVVPIISVFAIIGVMLFL. Topologically, residues 320 to 341 are extracellular; that stretch reads HLEQRVTILEQHFELDTLWLED. Residues 342–362 form a helical membrane-spanning segment; sequence ISVILCVVIVSNINLIPLIYF. The Cytoplasmic segment spans residues 363–381; sequence RLHEHVPRFKDRSPILNKA. The helical transmembrane segment at 382-402 threads the bilayer; it reads VVFLHFIYFSIVCGTILLVHL. The Extracellular segment spans residues 403 to 420; it reads QLRNKVSISDSLFSLYNS. A helical membrane pass occupies residues 421 to 441; the sequence is WLTDISMILGFLLSIFIVTTI. The Cytoplasmic portion of the chain corresponds to 442-474; sequence AKSSLFNKKWCIGLCIHMKEAEATGGPCEGEEL.

The protein belongs to the SKINT family. As to expression, expressed in skin, thymus and, to a lower extent, bladder and testis.

It localises to the membrane. In terms of biological role, may act by engaging a cell surface molecule on immature T-cells in the embryonic thymus. This is Selection and upkeep of intraepithelial T-cells protein 4 (Skint4) from Mus musculus (Mouse).